Here is a 369-residue protein sequence, read N- to C-terminus: Variable large protein 7 (369 aa).

An N-terminal signal peptide occupies residues 1–26 (MRKRISAIINKLNISIIIMTVVLMIG). C27 carries the N-palmitoyl cysteine lipid modification. A lipid anchor (S-diacylglycerol cysteine) is attached at C27.

Belongs to the variable large protein (Vlp) family. Alpha subfamily.

Its subcellular location is the cell outer membrane. Its function is as follows. The Vlp and Vsp proteins are antigenically distinct proteins, only one vlp or vsp gene is transcriptionally active at any one time. Switching between these genes is a mechanism of host immune response evasion. This chain is Variable large protein 7, found in Borrelia hermsii.